The primary structure comprises 522 residues: Subtilisin-like protease 10 (522 aa).

The N-terminal stretch at 1–19 is a signal peptide; the sequence is MFFFKGVVAVLSFFSAVNA. A propeptide spanning residues 20–117 is cleaved from the precursor; it reads APFMKPNNGT…VERDQIGTSQ (98 aa). Residues 36-113 enclose the Inhibitor I9 domain; that stretch reads SYIVLLKRDI…HVAHVERDQI (78 aa). One can recognise a Peptidase S8 domain in the interval 127 to 405; sequence NWGLGRLSNN…KLLVNGANGT (279 aa). Active-site charge relay system residues include Asp159 and His190. N-linked (GlcNAc...) asparagine glycosylation occurs at Asn251. Residue Ser348 is the Charge relay system of the active site. Residues 384–397 are compositionally biased toward polar residues; the sequence is ASVKNPGPNTTNKL. The tract at residues 384–515 is disordered; it reads ASVKNPGPNT…GWNRPMWWNR (132 aa). Residues Asn392 and Asn403 are each glycosylated (N-linked (GlcNAc...) asparagine). Residues 432 to 459 show a composition bias toward pro residues; sequence SQNPPPGQNPPPGQNPPPEQPAPSPPAN.

It belongs to the peptidase S8 family.

It localises to the secreted. Its function is as follows. Secreted subtilisin-like serine protease with keratinolytic activity that contributes to pathogenicity. This Arthroderma benhamiae (strain ATCC MYA-4681 / CBS 112371) (Trichophyton mentagrophytes) protein is Subtilisin-like protease 10 (SUB10).